The following is a 426-amino-acid chain: COMPASS component SWD1 (426 aa).

WD repeat units follow at residues 24-63 (ENPL…PICV), 70-109 (AHVR…KPLK), 212-251 (ITSS…ENSA), 264-307 (INKL…LVRV), and 310-350 (GAEE…KWSA). Positions 236 and 266 each coordinate DNA.

As to quaternary structure, component of the Set1C/COMPASS complex which consists of SET1(2), BRE2(2), SPP1(2), SDC1(1), SHG1(1), SWD1(1), SWD2(1), and SWD3(1).

It is found in the nucleus. It localises to the chromosome. The protein localises to the telomere. Functionally, component of the Set1C/COMPASS complex that specifically mono-, di- and trimethylates histone H3 to form H3K4me1/2/3, which subsequently plays a role in telomere length maintenance and transcription elongation regulation. COMPASS recognizes ubiquitinated H2B on one face of the nucleosome which stimulates the methylation of H3 on the opposing face. SWD1/CPS50 acts as an assembly and regulatory hub for COMPASS complex formation. Serves as a highly utilized surface for COMPASS interaction with the nucleosome. This is COMPASS component SWD1 from Saccharomyces cerevisiae (strain ATCC 204508 / S288c) (Baker's yeast).